A 273-amino-acid polypeptide reads, in one-letter code: WIMGHMVNAIAQIDEFVNLGANSIETDVSFDKNANPEYTYHGIPCDCGRTCTKWEYFNTFLGGLRKATTPGDSKYHEKLVLVVFDLKTGSLYDNQAYDAGTKLAKSLLQNYWNKGNNGGRAYIVLSIPNLDHYKLITGFKETLTKEEHPELMDKVGYDFSGNDDIGDVAKAYKKAGVTGHVWQSDGITNCLLRGLDRVRKAVANRDSSNGYINKVYYWTVDKRASTRDALDAGVDGIMTNYPDVIADVLSESAYTAKFRIATYDDNPWETFKN.

The active site involves His5. Mg(2+) contacts are provided by Glu25 and Asp27. His41 (nucleophile) is an active-site residue. 2 disulfide bridges follow: Cys45–Cys51 and Cys47–Cys190. Asp85 contacts Mg(2+).

It belongs to the arthropod phospholipase D family. Class II subfamily. It depends on Mg(2+) as a cofactor. Expressed by the venom gland.

The protein resides in the secreted. It carries out the reaction an N-(acyl)-sphingosylphosphocholine = an N-(acyl)-sphingosyl-1,3-cyclic phosphate + choline. The catalysed reaction is an N-(acyl)-sphingosylphosphoethanolamine = an N-(acyl)-sphingosyl-1,3-cyclic phosphate + ethanolamine. It catalyses the reaction a 1-acyl-sn-glycero-3-phosphocholine = a 1-acyl-sn-glycero-2,3-cyclic phosphate + choline. The enzyme catalyses a 1-acyl-sn-glycero-3-phosphoethanolamine = a 1-acyl-sn-glycero-2,3-cyclic phosphate + ethanolamine. Its function is as follows. Dermonecrotic toxins cleave the phosphodiester linkage between the phosphate and headgroup of certain phospholipids (sphingolipid and lysolipid substrates), forming an alcohol (often choline) and a cyclic phosphate. This toxin acts on sphingomyelin (SM). It may also act on ceramide phosphoethanolamine (CPE), lysophosphatidylcholine (LPC) and lysophosphatidylethanolamine (LPE), but not on lysophosphatidylserine (LPS), and lysophosphatidylglycerol (LPG). It acts by transphosphatidylation, releasing exclusively cyclic phosphate products as second products. Induces dermonecrosis, hemolysis, increased vascular permeability, edema, inflammatory response, and platelet aggregation. This is Dermonecrotic toxin LsaSicTox-alphaIB1ai from Loxosceles sabina (Tucson recluse spider).